The sequence spans 542 residues: Protein lin-9 homolog (542 aa).

An N-acetylalanine modification is found at Ala2. Lys21 participates in a covalent cross-link: Glycyl lysine isopeptide (Lys-Gly) (interchain with G-Cter in SUMO2). Ser65 and Ser95 each carry phosphoserine. A phosphothreonine mark is found at Thr96 and Thr304. Phosphoserine occurs at positions 309 and 321.

This sequence belongs to the lin-9 family. In terms of assembly, component of the DREAM complex (also named LINC complex) at least composed of E2F4, E2F5, LIN9, LIN37, LIN52, LIN54, MYBL1, MYBL2, RBL1, RBL2, RBBP4, TFDP1 and TFDP2. The complex exists in quiescent cells where it represses cell cycle-dependent genes. It dissociates in S phase when LIN9, LIN37, LIN52 and LIN54 form a subcomplex that binds to MYBL2. Interacts with RB1.

The protein resides in the nucleus. Its subcellular location is the nucleoplasm. Functionally, acts as a tumor suppressor. Inhibits DNA synthesis. Its ability to inhibit oncogenic transformation is mediated through its association with RB1. Plays a role in the expression of genes required for the G1/S transition. The protein is Protein lin-9 homolog (Lin9) of Mus musculus (Mouse).